The following is a 319-amino-acid chain: Putative GPI-anchor transamidase (319 aa).

The N-terminal stretch at 1–16 is a signal peptide; it reads MRHVLLIFCAIIATEA. Active-site residues include His-156 and Cys-198. Asn-257 is a glycosylation site (N-linked (GlcNAc...) asparagine).

This sequence belongs to the peptidase C13 family.

The protein operates within glycolipid biosynthesis; glycosylphosphatidylinositol-anchor biosynthesis. Functionally, mediates GPI anchoring in the endoplasmic reticulum, by replacing a protein's C-terminal GPI attachment signal peptide with a pre-assembled GPI. During this transamidation reaction, the GPI transamidase forms a carbonyl intermediate with the substrate protein. This is Putative GPI-anchor transamidase from Caenorhabditis elegans.